A 456-amino-acid polypeptide reads, in one-letter code: Acetylcholine receptor subunit alpha (456 aa).

The signal sequence occupies residues 1-20 (MNYFILILPILPYLYGPAVC). The Extracellular portion of the chain corresponds to 21-230 (SEDETRLVKT…ITYHFLLLRL (210 aa)). Cystine bridges form between C148-C162 and C212-C213. N161 is a glycosylation site (N-linked (GlcNAc...) asparagine). 3 helical membrane-spanning segments follow: residues 231–255 (PLYF…VFYL), 263–281 (MTLS…LVIV), and 297–316 (YMLF…VIVI). The Cytoplasmic portion of the chain corresponds to 317–428 (NTHHRSPSTH…WKFVAMVLDH (112 aa)). A helical membrane pass occupies residues 429–447 (ILLCVFMAVCIIGTLGVFA).

This sequence belongs to the ligand-gated ion channel (TC 1.A.9) family. Acetylcholine receptor (TC 1.A.9.1) subfamily. Alpha-1/CHRNA1 sub-subfamily. As to quaternary structure, one of the alpha chains that assemble within the acetylcholine receptor, a pentamer of two alpha chains, a beta, a delta, and a gamma or epsilon chains.

The protein resides in the postsynaptic cell membrane. Its subcellular location is the cell membrane. The enzyme catalyses K(+)(in) = K(+)(out). It catalyses the reaction Na(+)(in) = Na(+)(out). In terms of biological role, upon acetylcholine binding, the AChR responds by an extensive change in conformation that affects all subunits and leads to opening of an ion-conducting channel across the plasma membrane. In Danio rerio (Zebrafish), this protein is Acetylcholine receptor subunit alpha (chrna1).